A 150-amino-acid polypeptide reads, in one-letter code: MGNFIITERKKAKEERSNPQTDSMDDLLIRRLTDRNDKEAHLNELFQDNSGAIGGNIVSHDDALLNTLAILQKELKSKEQEIRRLKEVIALKNKNTERLNDELISGTIENNVLQQKLSDLKKEHSQLVARWLKKTEKETEAMNSEIDGTK.

Positions 1 to 23 are disordered; the sequence is MGNFIITERKKAKEERSNPQTDS. Residues 7–17 show a composition bias toward basic and acidic residues; it reads TERKKAKEERS. Residues 61–130 adopt a coiled-coil conformation; it reads DDALLNTLAI…KKEHSQLVAR (70 aa).

The protein belongs to the ATG16 family. Homodimer. Part of the 350 kDa complex which is at least composed of ATG5, ATG12 and ATG16. Several units of each may be present in this complex. Interacts directly with ATG12.

It localises to the preautophagosomal structure membrane. Functionally, stabilizes the ATG5-ATG12 conjugate and mediates the formation of the 350 kDa complex, which is necessary for autophagy. The ATG5-ATG12/ATG16 complex is required for efficient promotion of ATG8-conjugation to phosphatidylethanolamine and ATG8 localization to the pre-autophagosomal structure (PAS). Also recruits ATG3 to the PAS. Involved in endoplasmic reticulum-specific autophagic process and is essential for the survival of cells subjected to severe ER stress. The polypeptide is Autophagy-related protein 16 (ATG16) (Saccharomyces cerevisiae (strain YJM789) (Baker's yeast)).